The chain runs to 219 residues: Protein-L-isoaspartate O-methyltransferase 2 (219 aa).

Serine 67 is an active-site residue.

This sequence belongs to the methyltransferase superfamily. L-isoaspartyl/D-aspartyl protein methyltransferase family.

It is found in the cytoplasm. The enzyme catalyses [protein]-L-isoaspartate + S-adenosyl-L-methionine = [protein]-L-isoaspartate alpha-methyl ester + S-adenosyl-L-homocysteine. Catalyzes the methyl esterification of L-isoaspartyl residues in peptides and proteins that result from spontaneous decomposition of normal L-aspartyl and L-asparaginyl residues. It plays a role in the repair and/or degradation of damaged proteins. The protein is Protein-L-isoaspartate O-methyltransferase 2 of Nitrosococcus oceani (strain ATCC 19707 / BCRC 17464 / JCM 30415 / NCIMB 11848 / C-107).